The following is a 99-amino-acid chain: Large ribosomal subunit protein uL23 (99 aa).

The protein belongs to the universal ribosomal protein uL23 family. As to quaternary structure, part of the 50S ribosomal subunit. Contacts protein L29, and trigger factor when it is bound to the ribosome.

Functionally, one of the early assembly proteins it binds 23S rRNA. One of the proteins that surrounds the polypeptide exit tunnel on the outside of the ribosome. Forms the main docking site for trigger factor binding to the ribosome. The protein is Large ribosomal subunit protein uL23 of Psychromonas ingrahamii (strain DSM 17664 / CCUG 51855 / 37).